Here is a 164-residue protein sequence, read N- to C-terminus: MTIAFYAGSFDPITNGHLDVLRGSLLLADKVVVAIGVQAQKQSLFSFEERVDLITQVGRDLLNVGPDRLQVISFNNLLIDTAREIGASFLVRGLRDGTDFDYEMQMAGMNGIMAPELQTVFLPASISGRVITSTLVHQIAAMGGDVTHFVPQNVAQALRLKFKF.

Ser9 is a substrate binding site. ATP contacts are provided by residues 9-10 (SF) and His17. Lys41, Leu78, and Arg92 together coordinate substrate. ATP-binding positions include 93–95 (GLR), Glu103, and 128–134 (GRVITST).

This sequence belongs to the bacterial CoaD family. Homohexamer. The cofactor is Mg(2+).

The protein localises to the cytoplasm. The enzyme catalyses (R)-4'-phosphopantetheine + ATP + H(+) = 3'-dephospho-CoA + diphosphate. The protein operates within cofactor biosynthesis; coenzyme A biosynthesis; CoA from (R)-pantothenate: step 4/5. Reversibly transfers an adenylyl group from ATP to 4'-phosphopantetheine, yielding dephospho-CoA (dPCoA) and pyrophosphate. This Bartonella bacilliformis (strain ATCC 35685 / KC583 / Herrer 020/F12,63) protein is Phosphopantetheine adenylyltransferase.